A 189-amino-acid chain; its full sequence is GTPase NRas (189 aa).

Position 10-17 (10-17) interacts with GTP; it reads GAGGVGKS. The Effector region motif lies at 32-40; the sequence is YDPTIEDSY. GTP-binding positions include 57-61 and 116-119; these read DTAGQ and NKCD. The tract at residues 166–185 is hypervariable region; that stretch reads YRMKKLNSNEDGNQGCMGLS. Cys181 is lipidated: S-palmitoyl cysteine. Cys186 carries S-farnesyl cysteine lipidation. The propeptide at 187–189 is removed in mature form; it reads IVM.

The protein belongs to the small GTPase superfamily. Ras family. Post-translationally, palmitoylated by the ZDHHC9-GOLGA7 complex. Depalmitoylated by ABHD17A, ABHD17B and ABHD17C. A continuous cycle of de- and re-palmitoylation regulates rapid exchange between plasma membrane and Golgi.

The protein localises to the cell membrane. It is found in the golgi apparatus membrane. It catalyses the reaction GTP + H2O = GDP + phosphate + H(+). Its activity is regulated as follows. Alternates between an inactive form bound to GDP and an active form bound to GTP. Activated by a guanine nucleotide-exchange factor (GEF) and inactivated by a GTPase-activating protein (GAP). In terms of biological role, ras proteins bind GDP/GTP and possess intrinsic GTPase activity. The polypeptide is GTPase NRas (NRAS) (Gallus gallus (Chicken)).